We begin with the raw amino-acid sequence, 391 residues long: Acetate kinase (391 aa).

Asparagine 7 serves as a coordination point for Mg(2+). Lysine 14 provides a ligand contact to ATP. A substrate-binding site is contributed by arginine 88. Residue aspartate 145 is the Proton donor/acceptor of the active site. ATP is bound by residues 203-207 (HAGNG), 278-280 (DAR), and 326-330 (GMGEN). Glutamate 378 contributes to the Mg(2+) binding site.

Belongs to the acetokinase family. As to quaternary structure, homodimer. The cofactor is Mg(2+). It depends on Mn(2+) as a cofactor.

The protein resides in the cytoplasm. It catalyses the reaction acetate + ATP = acetyl phosphate + ADP. It participates in metabolic intermediate biosynthesis; acetyl-CoA biosynthesis; acetyl-CoA from acetate: step 1/2. Functionally, catalyzes the formation of acetyl phosphate from acetate and ATP. Can also catalyze the reverse reaction. The chain is Acetate kinase from Phytoplasma mali (strain AT).